Reading from the N-terminus, the 375-residue chain is MSTAGKVIKCKAAVLWEVKKPFSIEDVEVAPPKAYEVRIKMVAVGICRTDDHVVSGNLVSPLPAILGHEAAGIVESVGEGVTTVKPGDKVIPLFTPQCGKCRVCKSPEGNYCVKNDLSNPRGTLQDGTRRFTCRGKPIHHFVGTSTFSQYTVVDENAVAKIDAASPLEKVCLIGCGFSTGYGSAVNVAKVTPGSVCAVFGLGGVGLSAVMGCKAAGAARIIAVDINKDKFAKAKELGATECINPQDYKKPIQEVLKEMTDGGVDFSFEVIGRLDTMMASLLCCHEACGTSVIVGVPPDSQNLSINPMLLLTGRTWKGAVYGGFKSREGIPKLVADFMAKKFSLDALITHVLPFEKINEGFDLLRSGKSIRTVLTF.

Ser2 carries the post-translational modification N-acetylserine. At Ser23 the chain carries Phosphoserine. At Tyr35 the chain carries Phosphotyrosine. Zn(2+) is bound by residues Cys47, His68, Cys98, Cys101, Cys104, Cys112, and Cys175. NAD(+) contacts are provided by residues 200–205 (GLGGVG), Asp224, Lys229, 293–295 (VGV), and Arg370.

Belongs to the zinc-containing alcohol dehydrogenase family. In terms of assembly, homodimer or heterodimer of closely related subunits. It depends on Zn(2+) as a cofactor. Expressed in liver.

Its subcellular location is the cytoplasm. The catalysed reaction is all-trans-retinol + NAD(+) = all-trans-retinal + NADH + H(+). It catalyses the reaction all-trans-4-hydroxyretinol + NAD(+) = all-trans-4-hydroxyretinal + NADH + H(+). The enzyme catalyses all-trans-4-oxoretinol + NAD(+) = all-trans-4-oxoretinal + NADH + H(+). Functionally, catalyzes the NAD-dependent oxidation of all-trans-retinol and its derivatives such as all-trans-4-hydroxyretinol and may participate in retinoid metabolism. In vitro can also catalyze the NADH-dependent reduction of all-trans-retinal and its derivatives such as all-trans-4-oxoretinal. Catalyzes in the oxidative direction with higher efficiency. Has the same affinity for all-trans-4-hydroxyretinol and all-trans-4-oxoretinal. The chain is All-trans-retinol dehydrogenase [NAD(+)] ADH1B from Papio hamadryas (Hamadryas baboon).